Reading from the N-terminus, the 300-residue chain is 4-hydroxy-tetrahydrodipicolinate synthase (300 aa).

T49 contacts pyruvate. Y137 acts as the Proton donor/acceptor in catalysis. The active-site Schiff-base intermediate with substrate is K165. I207 provides a ligand contact to pyruvate.

The protein belongs to the DapA family. Homotetramer; dimer of dimers.

It is found in the cytoplasm. It catalyses the reaction L-aspartate 4-semialdehyde + pyruvate = (2S,4S)-4-hydroxy-2,3,4,5-tetrahydrodipicolinate + H2O + H(+). Its pathway is amino-acid biosynthesis; L-lysine biosynthesis via DAP pathway; (S)-tetrahydrodipicolinate from L-aspartate: step 3/4. In terms of biological role, catalyzes the condensation of (S)-aspartate-beta-semialdehyde [(S)-ASA] and pyruvate to 4-hydroxy-tetrahydrodipicolinate (HTPA). This chain is 4-hydroxy-tetrahydrodipicolinate synthase, found in Nitrosospira multiformis (strain ATCC 25196 / NCIMB 11849 / C 71).